Reading from the N-terminus, the 360-residue chain is RNA-binding protein 1 (360 aa).

Residues 6–82 (YKLFVGGIAK…KPVDVRKAIR (77 aa)) enclose the RRM 1 domain. Positions 93–113 (MQFLERKVQQMNGGLREMSSN) form a coiled coil. An RRM 2 domain is found at 120–197 (KKIFVGGLSS…KRVEVKRAIP (78 aa)).

Highly expressed in inflorescences and roots. Detected in leaves and seedlings, but not in stems. Expressed in vegetative shoot apex and root meristem, but not in root cap. Detected in flower buds, junction of pedicels, joints of immature siliques and pistil.

Its function is as follows. RNA binding protein. Can also bind in vitro to single-stranded DNA. The sequence is that of RNA-binding protein 1 (RBP1) from Arabidopsis thaliana (Mouse-ear cress).